A 98-amino-acid chain; its full sequence is uncharacterized protein (98 aa).

Belongs to the CFAP97 family. Expressed in a number of tissues including brain, thymus, lung, heart, liver, spleen, kidney and testis.

This is an uncharacterized protein from Mus musculus (Mouse).